Consider the following 125-residue polypeptide: SOSS complex subunit C homolog A (125 aa).

A compositionally biased stretch (polar residues) spans 1–16; it reads MAFPNTSAQQAETNSK. Disordered stretches follow at residues 1–20, 38–74, and 105–125; these read MAFP…SLEE, SNTN…AAFN, and PATP…NNPK.

Belongs to the SOSS-C family.

In Drosophila willistoni (Fruit fly), this protein is SOSS complex subunit C homolog A.